The following is a 363-amino-acid chain: Aminomethyltransferase (363 aa).

It belongs to the GcvT family. In terms of assembly, the glycine cleavage system is composed of four proteins: P, T, L and H.

The enzyme catalyses N(6)-[(R)-S(8)-aminomethyldihydrolipoyl]-L-lysyl-[protein] + (6S)-5,6,7,8-tetrahydrofolate = N(6)-[(R)-dihydrolipoyl]-L-lysyl-[protein] + (6R)-5,10-methylene-5,6,7,8-tetrahydrofolate + NH4(+). In terms of biological role, the glycine cleavage system catalyzes the degradation of glycine. The polypeptide is Aminomethyltransferase (Dechloromonas aromatica (strain RCB)).